The sequence spans 294 residues: 2,2',3-trihydroxybiphenyl dioxygenase (294 aa).

VOC domains follow at residues 7–120 and 144–264; these read GYLI…LYVE and GLGH…LGFG. Fe cation contacts are provided by histidine 147, histidine 209, and glutamate 260.

Belongs to the extradiol ring-cleavage dioxygenase family. As to quaternary structure, monomer. Fe(2+) serves as cofactor.

The protein operates within xenobiotic degradation; dibenzo-p-dioxin degradation; 2-hydroxymuconate and catechol from dibenzo-p-dioxin: step 2/3. It functions in the pathway xenobiotic degradation; dibenzofuran degradation; 2-hydroxy-2,4-pentadienoate and salicylate from dibenzofuran: step 2/3. Its function is as follows. Responsible for meta-cleavage of the first aromatic ring of 2,2',3-trihydroxybiphenyl and 2,3-dihydroxybiphenyl. 2,2',3-trihydroxydiphenyl ether, catechol, 3-methylcatechol, and 4-methylcatechol are oxidized less efficiently and 3,4-dihydroxybiphenyl is oxidized considerably less efficiently. The protein is 2,2',3-trihydroxybiphenyl dioxygenase (dbfB) of Sphingomonas paucimobilis (Pseudomonas paucimobilis).